The chain runs to 272 residues: Putative G-protein coupled receptor GPR32P1 (272 aa).

The disordered stretch occupies residues M1–S24. Residues M1–T46 are Extracellular-facing. N30 is a glycosylation site (N-linked (GlcNAc...) asparagine). Residues M47–V67 form a helical membrane-spanning segment. Topologically, residues T68–T78 are cytoplasmic. Residues V79–V99 form a helical membrane-spanning segment. The Extracellular segment spans residues Y100–L116. An intrachain disulfide couples C114 to C191. The helical transmembrane segment at Y117 to V137 threads the bilayer. Topologically, residues D138–A158 are cytoplasmic. A helical transmembrane segment spans residues S159–F179. Residues R180 to Q213 are Extracellular-facing. N199 carries N-linked (GlcNAc...) asparagine glycosylation. Residues M214–T234 form a helical membrane-spanning segment. At C235 to T272 the chain is on the cytoplasmic side.

The protein belongs to the G-protein coupled receptor 1 family.

The protein localises to the cell membrane. Functionally, orphan receptor. The protein is Putative G-protein coupled receptor GPR32P1 (GPR32P1) of Homo sapiens (Human).